The chain runs to 907 residues: Polyphosphoinositide phosphatase (907 aa).

In terms of domain architecture, SAC spans 154 to 547; the sequence is FQNVDLSSNF…GDTLSLQYGG (394 aa). Residues 707–788 form a disordered region; that stretch reads GIDPSPFTVR…VKMTDAGDSA (82 aa). Acidic residues predominate over residues 758 to 770; it reads SEDDSGTDREEEG.

In terms of assembly, component of the PI(3,5)P2 regulatory complex/PAS complex, at least composed of PIKFYVE, FIG4 and VAC14. VAC14 nucleates the assembly of the complex and serves as a scaffold by pentamerizing into a star-shaped structure, which can bind a single copy each of PIKFYVE and FIG4 and coordinates their activities.

It localises to the endosome membrane. It carries out the reaction a 1,2-diacyl-sn-glycero-3-phospho-(1D-myo-inositol-3,5-bisphosphate) + H2O = a 1,2-diacyl-sn-glycero-3-phospho-(1D-myo-inositol-3-phosphate) + phosphate. It catalyses the reaction a 1,2-diacyl-sn-glycero-3-phospho-(1D-myo-inositol-4,5-bisphosphate) + H2O = a 1,2-diacyl-sn-glycero-3-phospho-(1D-myo-inositol 4-phosphate) + phosphate. The catalysed reaction is a 1,2-diacyl-sn-glycero-3-phospho-(1D-myo-inositol-3,4,5-trisphosphate) + H2O = a 1,2-diacyl-sn-glycero-3-phospho-(1D-myo-inositol-3,4-bisphosphate) + phosphate. The enzyme catalyses O-phospho-L-seryl-[protein] + H2O = L-seryl-[protein] + phosphate. In terms of biological role, dual specificity phosphatase component of the PI(3,5)P2 regulatory complex which regulates both the synthesis and turnover of phosphatidylinositol 3,5-bisphosphate (PtdIns(3,5)P2). Catalyzes the dephosphorylation of phosphatidylinositol 3,5-bisphosphate (PtdIns(3,5)P2) to form phosphatidylinositol 3-phosphate. Has serine-protein phosphatase activity acting on PIKfyve to stimulate its lipid kinase activity, its catalytically activity being required for maximal PI(3,5)P2 production. In vitro, hydrolyzes all three D5-phosphorylated polyphosphoinositide and although displaying preferences for PtdIns(3,5)P2, it is capable of hydrolyzing PtdIns(3,4,5)P3 and PtdIns(4,5)P2, at least in vitro. The chain is Polyphosphoinositide phosphatase from Homo sapiens (Human).